The following is a 304-amino-acid chain: MAPPEAEVGAVMVMAPPTPGTPGTPGGPLITGMRVDSMSFDHRKPTPRCKCLPVMGSTWGQHDTCFTDFPSPDVSLTRKLGAEFVGTFILIFTATAGPIVNQKYDGAETLIGNAACAGLAVMIIILSTGHISGAHLNPSLTIAFAALRHFPWAHVPAYIAAQVSASICASFALKGVFHPFMSGGVTIPSVSLGQAFALEFIITFILLFVVTAVATDTRAVGELAGIAVGATVMLNILVAGPSTGGSMNPVRTLGPAVASGNYRSLWVYLVAPTLGAISGAAVYTGVKLNDSVTDPPRPVRSFRR.

The next 2 helical transmembrane spans lie at 80–100 (LGAEFVGTFILIFTATAGPIV) and 106–126 (GAETLIGNAACAGLAVMIIIL). The NPA 1 signature appears at 137–139 (NPS). 3 helical membrane passes run 157–177 (AYIAAQVSASICASFALKGVF), 195–215 (AFALEFIITFILLFVVTAVAT), and 219–239 (AVGELAGIAVGATVMLNILVA). The NPA 2 motif lies at 248 to 250 (NPV). Residues 266-286 (WVYLVAPTLGAISGAAVYTGV) form a helical membrane-spanning segment. Phosphoserine is present on Ser-301.

This sequence belongs to the MIP/aquaporin (TC 1.A.8) family. NIP (TC 1.A.8.12) subfamily. In terms of tissue distribution, expressed in rosette leaves.

It localises to the cell membrane. Functionally, boric acid transporter. Low water transport activity. Plays an important role as plasma membrane boric acid channel for the boron uptake required for plant growth and development under boron limitation. This is Probable aquaporin NIP5-1 (NIP5-1) from Arabidopsis thaliana (Mouse-ear cress).